A 933-amino-acid chain; its full sequence is Progesterone receptor (933 aa).

Positions 1 to 48 are disordered; that stretch reads MTELKAKGPRAPHVAGGPPSPEVGSPLLCRPAAGPFEGSQTSDTLPEV. Positions 1–164 are AF3; mediates transcriptional activation; that stretch reads MTELKAKGPR…PATQRVLSPL (164 aa). Residues 1-566 form a modulating, Pro-Rich region; that stretch reads MTELKAKGPR…YSFESLPQKI (566 aa). S20 bears the Phosphoserine mark. The LXXL motif 1 signature appears at 55-59; that stretch reads LDGLL. Residues 66–255 form a disordered region; sequence GQDLPDEKTQ…GAAAGGGAAA (190 aa). The residue at position 81 (S81) is a Phosphoserine. The short motif at 115–119 is the LXXL motif 2 element; that stretch reads LDTLL. Phosphoserine occurs at positions 130 and 162. Residues 165 to 305 are mediates transcriptional transrepression; that stretch reads MSRSGGKTGD…LATTMMDFIH (141 aa). Residues 183 to 187 carry the Nuclear localization signal motif; it reads KVLPR. A phosphoserine mark is found at S190 and S213. S294 carries the post-translational modification Phosphoserine; by MAPK1. The segment at 331 to 378 is disordered; the sequence is GGAGAASAFAPPQSSPSASSTPVAVGDFPDCAYPPDAEPKDNAYPLYG. Residues 335–350 are compositionally biased toward low complexity; sequence AASAFAPPQSSPSASS. S345 is subject to Phosphoserine; by MAPK. K388 participates in a covalent cross-link: Glycyl lysine isopeptide (Lys-Gly) (interchain with G-Cter in SUMO); alternate. A Glycyl lysine isopeptide (Lys-Gly) (interchain with G-Cter in ubiquitin); alternate cross-link involves residue K388. S400 is subject to Phosphoserine; by CDK2. The disordered stretch occupies residues 415-454; sequence PDYPLGPPPQLPPRAPPSRPGEAAVTAAPASASVSSASSP. The span at 418–433 shows a compositional bias: pro residues; that stretch reads PLGPPPQLPPRAPPSR. Residues 437–454 show a composition bias toward low complexity; sequence AAVTAAPASASVSSASSP. Positions 456 to 546 are AF1; mediates transcriptional activation; it reads STLECILYKA…VYPPYLNYLR (91 aa). K531 is covalently cross-linked (Glycyl lysine isopeptide (Lys-Gly) (interchain with G-Cter in SUMO)). 2 consecutive NR C4-type zinc fingers follow at residues 567 to 587 and 603 to 627; these read CLICGDEASGCHYGVLTCGSC and CAGRNDCIVDKIRRKNCPACRLRKC. The nuclear receptor DNA-binding region spans 567-639; the sequence is CLICGDEASG…AGMVLGGRKF (73 aa). Residue S676 is modified to Phosphoserine. The NR LBD domain maps to 679-913; that stretch reads QDIQLIPPLI…EFPEMMSEVI (235 aa). The tract at residues 687 to 933 is AF2; mediates transcriptional activation; it reads LIKLLMSIEP…MVKPLLFHKK (247 aa).

The protein belongs to the nuclear hormone receptor family. In terms of assembly, interacts with SMARD1 and UNC45A. Interacts with CUEDC2; the interaction promotes ubiquitination, decreases sumoylation, and represses transcriptional activity. Interacts with PIAS3; the interaction promotes sumoylation of PR in a hormone-dependent manner, inhibits DNA-binding, and alters nuclear export. Interacts with SP1; the interaction requires ligand-induced phosphorylation on Ser-345 by ERK1/2-MAPK. Interacts with PRMT2. Interacts with NCOA2 and NCOA1. Interacts with KLF9. Interacts with GTF2B. Phosphorylated on multiple serine sites. Several of these sites are hormone-dependent. Phosphorylation on Ser-294 is highly hormone-dependent and modulates ubiquitination and sumoylation on Lys-388. Phosphorylation on Ser-345 also requires induction by hormone. Basal phosphorylation on Ser-81, Ser-162, Ser-190 and Ser-400 is increased in response to progesterone and can be phosphorylated in vitro by the CDK2-A1 complex. Increased levels of phosphorylation on Ser-400 also in the presence of EGF, heregulin, IGF, PMA and FBS. Phosphorylation at this site by CDK2 is ligand-independent, and increases nuclear translocation and transcriptional activity. Phosphorylation at Ser-162 and Ser-294, but not at Ser-190, is impaired during the G(2)/M phase of the cell cycle. Phosphorylation on Ser-345 by ERK1/2 MAPK is required for interaction with SP1. Post-translationally, sumoylation is hormone-dependent and represses transcriptional activity. Sumoylation on all three sites is enhanced by PIAS3. Desumoylated by SENP1. Sumoylation on Lys-388, the main site of sumoylation, is repressed by ubiquitination on the same site, and modulated by phosphorylation at Ser-294. In terms of processing, ubiquitination is hormone-dependent and represses sumoylation on the same site. Promoted by MAPK-mediated phosphorylation on Ser-294. Palmitoylated by ZDHHC7 and ZDHHC21. Palmitoylation is required for plasma membrane targeting and for rapid intracellular signaling via ERK and AKT kinases and cAMP generation.

The protein localises to the nucleus. It localises to the cytoplasm. Its function is as follows. The steroid hormones and their receptors are involved in the regulation of eukaryotic gene expression and affect cellular proliferation and differentiation in target tissues. Transcriptional activator of several progesteron-dependent promoters in a variety of cell types. Involved in activation of SRC-dependent MAPK signaling on hormone stimulation. The protein is Progesterone receptor (PGR) of Trachypithecus obscurus (Dusky leaf-monkey).